The primary structure comprises 570 residues: Urease subunit alpha (570 aa).

A Urease domain is found at 132 to 570 (GGIDTHVHFL…VPMARRYFLF (439 aa)). Positions 137, 139, and 220 each coordinate Ni(2+). At lysine 220 the chain carries N6-carboxylysine. Histidine 222 provides a ligand contact to substrate. Ni(2+) contacts are provided by histidine 249 and histidine 275. Catalysis depends on histidine 323, which acts as the Proton donor. Position 363 (aspartate 363) interacts with Ni(2+).

The protein belongs to the metallo-dependent hydrolases superfamily. Urease alpha subunit family. Heterotrimer of UreA (gamma), UreB (beta) and UreC (alpha) subunits. Three heterotrimers associate to form the active enzyme. Ni cation serves as cofactor. Carboxylation allows a single lysine to coordinate two nickel ions.

The protein resides in the cytoplasm. It carries out the reaction urea + 2 H2O + H(+) = hydrogencarbonate + 2 NH4(+). Its pathway is nitrogen metabolism; urea degradation; CO(2) and NH(3) from urea (urease route): step 1/1. In Corynebacterium glutamicum (strain ATCC 13032 / DSM 20300 / JCM 1318 / BCRC 11384 / CCUG 27702 / LMG 3730 / NBRC 12168 / NCIMB 10025 / NRRL B-2784 / 534), this protein is Urease subunit alpha.